We begin with the raw amino-acid sequence, 225 residues long: PKHD-type hydroxylase YbiX (225 aa).

The Fe2OG dioxygenase domain maps to 78–177 (TLSTPLFNRY…RVASFMWIQS (100 aa)). Residues His96, Asp98, and His158 each coordinate Fe cation. A 2-oxoglutarate-binding site is contributed by Arg168.

It depends on Fe(2+) as a cofactor. Requires L-ascorbate as cofactor.

This Escherichia coli O6:H1 (strain CFT073 / ATCC 700928 / UPEC) protein is PKHD-type hydroxylase YbiX.